The chain runs to 883 residues: DNA double-strand break repair Rad50 ATPase (883 aa).

ATP-binding positions include K12, 32 to 38 (NGSGKSS), and Q137. Positions 244–283 (ERYEESRTALADVEETIADVREAVAEAERERETLADRVSD) form a coiled coil. Disordered regions lie at residues 271–290 (ERER…RASD) and 305–326 (DDPD…REAV). Over residues 313 to 326 (SAERDAVADQREAV) the composition is skewed to basic and acidic residues. Coiled-coil stretches lie at residues 336-389 (AVSR…IEAL) and 414-452 (LDDA…LDEG). The region spanning 407–506 (FGAAEAFLDD…RVDRGESLVA (100 aa)) is the Zinc-hook domain. Positions 454 and 457 each coordinate Zn(2+). The tract at residues 508–565 (EDRVDDLEQQRERAVERRDEQADIADAKRDQAAEKRDRAADLDAEAEDARADAAAKRD) is disordered. Coiled coils occupy residues 571-604 (RETL…AADA) and 668-720 (KLQA…VTAL).

The protein belongs to the SMC family. RAD50 subfamily. Homodimer. Forms a heterotetramer composed of two Mre11 subunits and two Rad50 subunits. Zn(2+) is required as a cofactor.

Its function is as follows. Part of the Rad50/Mre11 complex, which is involved in the early steps of DNA double-strand break (DSB) repair. Rad50 controls the balance between DNA end bridging and DNA resection via ATP-dependent structural rearrangements of the Rad50/Mre11 complex. This Halobacterium salinarum (strain ATCC 700922 / JCM 11081 / NRC-1) (Halobacterium halobium) protein is DNA double-strand break repair Rad50 ATPase.